The sequence spans 138 residues: Transcription antitermination protein NusB (138 aa).

The protein belongs to the NusB family.

In terms of biological role, involved in transcription antitermination. Required for transcription of ribosomal RNA (rRNA) genes. Binds specifically to the boxA antiterminator sequence of the ribosomal RNA (rrn) operons. The chain is Transcription antitermination protein NusB from Photorhabdus laumondii subsp. laumondii (strain DSM 15139 / CIP 105565 / TT01) (Photorhabdus luminescens subsp. laumondii).